The chain runs to 367 residues: Epoxide hydrolase 3 (367 aa).

A helical membrane pass occupies residues 22 to 42 (ALVMSLVYLAALVAAFVYSCI). The active-site Nucleophile is the Asp180. The active-site Proton donor is the Tyr288. Residue His344 is the Proton acceptor of the active site.

This sequence belongs to the AB hydrolase superfamily. Epoxide hydrolase family. Predominantly expressed in skin, esophagus, lung and tongue and to a lesser extent in pancreas and eye.

Its subcellular location is the microsome membrane. The catalysed reaction is an epoxide + H2O = an ethanediol. It carries out the reaction 9,10-epoxyoctadecanoate + H2O = 9,10-dihydroxyoctadecanoate. The enzyme catalyses 9,10-epoxy-(12Z)-octadecenoate + H2O = 9,10-dihydroxy-(12Z)-octadecenoate. It catalyses the reaction 8,9-epoxy-(5Z,11Z,14Z)-eicosatrienoate + H2O = 8,9-dihydroxy-(5Z,11Z,14Z)-eicosatrienoate. The catalysed reaction is 11,12-epoxy-(5Z,8Z,14Z)-eicosatrienoate + H2O = 11,12-dihydroxy-(5Z,8Z,14Z)-eicosatrienoate. It carries out the reaction 14,15-epoxy-(5Z,8Z,11Z)-eicosatrienoate + H2O = 14,15-dihydroxy-(5Z,8Z,11Z)-eicosatrienoate. With respect to regulation, inhibited by 1-(1-acetylpiperidin-4-yl)-3-(4-(trifl uoromethoxy)phenyl)urea (TPAU), 1-cyclohexyl-3-dodecylurea (CDU), 12-(3-adamantan-1-yl-ureido)-dodecanoic acid (AUDA), 1-((3S, 5S, 7S)-adamantan-1-yl)-3-(5-(2-(2-ethoxyethoxy) ethoxy)pentyl)urea (AEPU) and to a lesser extent by 8-(3-((3S, 5S, 7S)-adamantan-1-yl)ureido) octanoic acid (AUOA). In terms of biological role, catalyzes the hydrolysis of epoxide-containing fatty acids. Active in vitro against epoxyeicosatrienoic acids (EETs) including 8,9-EET, 9,10-EET, 11,12-EET and 14,15-EET and leukotoxin. This Mus musculus (Mouse) protein is Epoxide hydrolase 3 (Ephx3).